Consider the following 92-residue polypeptide: Small ribosomal subunit protein uS19 (92 aa).

This sequence belongs to the universal ribosomal protein uS19 family.

Functionally, protein S19 forms a complex with S13 that binds strongly to the 16S ribosomal RNA. The protein is Small ribosomal subunit protein uS19 of Albidiferax ferrireducens (strain ATCC BAA-621 / DSM 15236 / T118) (Rhodoferax ferrireducens).